Here is a 205-residue protein sequence, read N- to C-terminus: Adenylyl-sulfate kinase (205 aa).

Residue glycine 39 to serine 46 participates in ATP binding. Residue serine 113 is the Phosphoserine intermediate of the active site.

The protein belongs to the APS kinase family.

The enzyme catalyses adenosine 5'-phosphosulfate + ATP = 3'-phosphoadenylyl sulfate + ADP + H(+). The protein operates within sulfur metabolism; hydrogen sulfide biosynthesis; sulfite from sulfate: step 2/3. Catalyzes the synthesis of activated sulfate. The protein is Adenylyl-sulfate kinase of Vibrio parahaemolyticus serotype O3:K6 (strain RIMD 2210633).